The following is a 440-amino-acid chain: Ultraviolet-B receptor UVR8 (440 aa).

Ala2 carries the N-acetylalanine modification. 8 RCC1 repeats span residues 2 to 31 (AEDM…VALL), 32 to 84 (SGDI…AYSQ), 86 to 137 (GMEV…AVTM), 139 to 189 (GEVQ…AVTE), 190 to 241 (DGDL…SVSY), 243 to 293 (GALY…ALTS), 294 to 345 (DGKL…AVTE), and 347 to 399 (NNVF…SGKS). The required for interaction with COP1 stretch occupies residues 397–423 (GKSWVSPAERYAVVPDETGLTDGSSKG). The segment at 413-440 (ETGLTDGSSKGNGGDISVPQTDVKRVRI) is disordered.

Homodimer in the absence of UV-B, but absorption of UV-B induces monomerization of UVR8 and interaction with COP1. Interacts with RUP1, RUP2 and histone H2B.

The protein localises to the nucleus. The protein resides in the cytoplasm. It is found in the cytosol. In terms of biological role, UV-B specific signaling component that acts as a UV-B photoreceptor and plays a key role in establishing UV-protective responses in plants. Upon UV-B irradiation, UVR8 undergoes an immediate switch from homodimer to monomer, accumulates in the nucleus, interacts with the photomorphogenic repressor COP1 and regulates the expression of the transcription factor HY5 by associating with chromatin (through histone H2B binding) in the HY5 promoter region. UVR8 is involved in controlling aspects of leaf growth and morphogenesis in response to UV-B, is required for normal progression of endocycle and has a regulatory role in stomatal differentiation. Is required for plant circadian clock response to photomorphogenic UV-B light, partly through the transcriptional activation of responsive clock genes. Promotes photosynthetic efficiency at elevated levels of UV-B. Plays a role in mediating the effects of UV-B radiation on pathogen resistance by controlling the expression of the sinapate biosynthetic pathway. The two tryptophans, Trp-285 and Trp-233, serve collectively as the UV-B chromophore. The protein is Ultraviolet-B receptor UVR8 of Arabidopsis thaliana (Mouse-ear cress).